We begin with the raw amino-acid sequence, 140 residues long: Small ribosomal subunit protein uS9 (140 aa).

It belongs to the universal ribosomal protein uS9 family.

This Desulfurococcus amylolyticus (strain DSM 18924 / JCM 16383 / VKM B-2413 / 1221n) (Desulfurococcus kamchatkensis) protein is Small ribosomal subunit protein uS9.